Here is a 126-residue protein sequence, read N- to C-terminus: Small ribosomal subunit protein uS13 (126 aa).

The interval 93-126 is disordered; sequence RRGLPVRGQRTKTNARTRKGPKRTVAGKKKAGRK.

Belongs to the universal ribosomal protein uS13 family. As to quaternary structure, part of the 30S ribosomal subunit. Forms a loose heterodimer with protein S19. Forms two bridges to the 50S subunit in the 70S ribosome.

Located at the top of the head of the 30S subunit, it contacts several helices of the 16S rRNA. In the 70S ribosome it contacts the 23S rRNA (bridge B1a) and protein L5 of the 50S subunit (bridge B1b), connecting the 2 subunits; these bridges are implicated in subunit movement. Contacts the tRNAs in the A and P-sites. The polypeptide is Small ribosomal subunit protein uS13 (Beutenbergia cavernae (strain ATCC BAA-8 / DSM 12333 / CCUG 43141 / JCM 11478 / NBRC 16432 / NCIMB 13614 / HKI 0122)).